A 265-amino-acid polypeptide reads, in one-letter code: Glutamate racemase (265 aa).

Residues 12-13 (DS) and 44-45 (YG) each bind substrate. Cysteine 75 serves as the catalytic Proton donor/acceptor. 76 to 77 (NT) is a substrate binding site. The active-site Proton donor/acceptor is cysteine 186. Position 187-188 (187-188 (TH)) interacts with substrate.

The protein belongs to the aspartate/glutamate racemases family.

The catalysed reaction is L-glutamate = D-glutamate. The protein operates within cell wall biogenesis; peptidoglycan biosynthesis. Provides the (R)-glutamate required for cell wall biosynthesis. This Pseudomonas putida (strain W619) protein is Glutamate racemase.